Consider the following 450-residue polypeptide: Bifunctional protein GlmU (450 aa).

The tract at residues 1–228 (MKTALVILAA…ESETLGINSR (228 aa)) is pyrophosphorylase. UDP-N-acetyl-alpha-D-glucosamine-binding positions include 8–11 (LAAG), Lys22, Gln75, and 80–81 (GT). Asp105 is a binding site for Mg(2+). Gly140, Glu154, Asn169, and Asn226 together coordinate UDP-N-acetyl-alpha-D-glucosamine. Asn226 is a Mg(2+) binding site. A linker region spans residues 229 to 249 (TELSAAEAAFQERARTNAFEN). The segment at 250–450 (GVTLPAPGTV…AKKAKQQRGS (201 aa)) is N-acetyltransferase. 2 residues coordinate UDP-N-acetyl-alpha-D-glucosamine: Arg315 and Lys333. The active-site Proton acceptor is His345. UDP-N-acetyl-alpha-D-glucosamine is bound by residues Tyr348 and Asn359. Acetyl-CoA contacts are provided by residues Ala362, 368–369 (NY), Ser387, Ser405, and Arg422.

The protein in the N-terminal section; belongs to the N-acetylglucosamine-1-phosphate uridyltransferase family. In the C-terminal section; belongs to the transferase hexapeptide repeat family. As to quaternary structure, homotrimer. Requires Mg(2+) as cofactor.

It localises to the cytoplasm. It carries out the reaction alpha-D-glucosamine 1-phosphate + acetyl-CoA = N-acetyl-alpha-D-glucosamine 1-phosphate + CoA + H(+). The enzyme catalyses N-acetyl-alpha-D-glucosamine 1-phosphate + UTP + H(+) = UDP-N-acetyl-alpha-D-glucosamine + diphosphate. It participates in nucleotide-sugar biosynthesis; UDP-N-acetyl-alpha-D-glucosamine biosynthesis; N-acetyl-alpha-D-glucosamine 1-phosphate from alpha-D-glucosamine 6-phosphate (route II): step 2/2. Its pathway is nucleotide-sugar biosynthesis; UDP-N-acetyl-alpha-D-glucosamine biosynthesis; UDP-N-acetyl-alpha-D-glucosamine from N-acetyl-alpha-D-glucosamine 1-phosphate: step 1/1. The protein operates within bacterial outer membrane biogenesis; LPS lipid A biosynthesis. Catalyzes the last two sequential reactions in the de novo biosynthetic pathway for UDP-N-acetylglucosamine (UDP-GlcNAc). The C-terminal domain catalyzes the transfer of acetyl group from acetyl coenzyme A to glucosamine-1-phosphate (GlcN-1-P) to produce N-acetylglucosamine-1-phosphate (GlcNAc-1-P), which is converted into UDP-GlcNAc by the transfer of uridine 5-monophosphate (from uridine 5-triphosphate), a reaction catalyzed by the N-terminal domain. This Roseobacter denitrificans (strain ATCC 33942 / OCh 114) (Erythrobacter sp. (strain OCh 114)) protein is Bifunctional protein GlmU.